We begin with the raw amino-acid sequence, 348 residues long: Neuronal growth regulator 1 (348 aa).

A signal peptide spans 1-31; that stretch reads MVLLAQGACCSNQWLAAVLLSLCSCLPAGQS. 3 Ig-like C2-type domains span residues 32 to 128, 133 to 215, and 219 to 307; these read VDFP…VHLT, PKIY…RVIV, and PTIQ…LPLN. A disulfide bridge links C54 with C112. N-linked (GlcNAc...) asparagine glycans are attached at residues N67 and N149. 2 disulfides stabilise this stretch: C154-C197 and C239-C291. Y181 bears the Phosphotyrosine mark. N-linked (GlcNAc...) asparagine glycosylation is found at N269, N280, N288, and N301. A lipid anchor (GPI-anchor amidated glycine) is attached at G318. The propeptide at 319–348 is removed in mature form; sequence SACDLFSCWSLALTLSSVISIFYLKNAILQ.

It belongs to the immunoglobulin superfamily. IgLON family. Expressed in brain.

It localises to the cell membrane. In terms of biological role, may be involved in cell-adhesion. May function as a trans-neural growth-promoting factor in regenerative axon sprouting in the mammalian brain. This chain is Neuronal growth regulator 1 (Negr1), found in Mus musculus (Mouse).